The primary structure comprises 433 residues: Glutamate-1-semialdehyde 2,1-aminomutase (433 aa).

The residue at position 269 (Lys-269) is an N6-(pyridoxal phosphate)lysine.

This sequence belongs to the class-III pyridoxal-phosphate-dependent aminotransferase family. HemL subfamily. In terms of assembly, homodimer. Requires pyridoxal 5'-phosphate as cofactor.

It is found in the cytoplasm. It carries out the reaction (S)-4-amino-5-oxopentanoate = 5-aminolevulinate. It functions in the pathway porphyrin-containing compound metabolism; protoporphyrin-IX biosynthesis; 5-aminolevulinate from L-glutamyl-tRNA(Glu): step 2/2. In Francisella philomiragia subsp. philomiragia (strain ATCC 25017 / CCUG 19701 / FSC 153 / O#319-036), this protein is Glutamate-1-semialdehyde 2,1-aminomutase.